The sequence spans 611 residues: Dihydroxy-acid dehydratase (611 aa).

Residue Asp-81 participates in Mg(2+) binding. Cys-122 contributes to the [2Fe-2S] cluster binding site. Mg(2+) is bound by residues Asp-123 and Lys-124. An N6-carboxylysine modification is found at Lys-124. Cys-195 lines the [2Fe-2S] cluster pocket. Mg(2+) is bound at residue Glu-491. Catalysis depends on Ser-517, which acts as the Proton acceptor.

The protein belongs to the IlvD/Edd family. Homodimer. Requires [2Fe-2S] cluster as cofactor. The cofactor is Mg(2+).

It carries out the reaction (2R)-2,3-dihydroxy-3-methylbutanoate = 3-methyl-2-oxobutanoate + H2O. The enzyme catalyses (2R,3R)-2,3-dihydroxy-3-methylpentanoate = (S)-3-methyl-2-oxopentanoate + H2O. It functions in the pathway amino-acid biosynthesis; L-isoleucine biosynthesis; L-isoleucine from 2-oxobutanoate: step 3/4. Its pathway is amino-acid biosynthesis; L-valine biosynthesis; L-valine from pyruvate: step 3/4. Functions in the biosynthesis of branched-chain amino acids. Catalyzes the dehydration of (2R,3R)-2,3-dihydroxy-3-methylpentanoate (2,3-dihydroxy-3-methylvalerate) into 2-oxo-3-methylpentanoate (2-oxo-3-methylvalerate) and of (2R)-2,3-dihydroxy-3-methylbutanoate (2,3-dihydroxyisovalerate) into 2-oxo-3-methylbutanoate (2-oxoisovalerate), the penultimate precursor to L-isoleucine and L-valine, respectively. This Histophilus somni (strain 2336) (Haemophilus somnus) protein is Dihydroxy-acid dehydratase.